The primary structure comprises 720 residues: NAD(P)H-quinone oxidoreductase subunit 5, chloroplastic (720 aa).

Helical transmembrane passes span 9–29 (WIVP…LLFF), 39–59 (IWAI…FNIL), 87–107 (FLID…GVLV), 125–145 (FAYL…PNLI), 147–167 (IYIF…FWFT), 189–209 (LLLG…EILF), 221–239 (VNLY…GPIA), 258–278 (TPIS…FLVA), 286–306 (LLPF…FLGA), 327–347 (LGYM…FHLI), 354–374 (ALLF…VGYS), 395–415 (GITF…ACFW), 434–454 (ISLV…FLTF), 530–550 (LFPL…GAPF), 590–610 (LSVV…FSLF), and 700–720 (LFGL…GAMF).

Belongs to the complex I subunit 5 family. In terms of assembly, NDH is composed of at least 16 different subunits, 5 of which are encoded in the nucleus.

It localises to the plastid. The protein localises to the chloroplast thylakoid membrane. The catalysed reaction is a plastoquinone + NADH + (n+1) H(+)(in) = a plastoquinol + NAD(+) + n H(+)(out). The enzyme catalyses a plastoquinone + NADPH + (n+1) H(+)(in) = a plastoquinol + NADP(+) + n H(+)(out). In terms of biological role, NDH shuttles electrons from NAD(P)H:plastoquinone, via FMN and iron-sulfur (Fe-S) centers, to quinones in the photosynthetic chain and possibly in a chloroplast respiratory chain. The immediate electron acceptor for the enzyme in this species is believed to be plastoquinone. Couples the redox reaction to proton translocation, and thus conserves the redox energy in a proton gradient. The sequence is that of NAD(P)H-quinone oxidoreductase subunit 5, chloroplastic (ndhF) from Physcomitrium patens (Spreading-leaved earth moss).